A 178-amino-acid polypeptide reads, in one-letter code: Meiotically up-regulated gene 95 protein (178 aa).

Topologically, residues 1 to 12 (MNLFVYIAQNPT) are cytoplasmic. Residues 13–30 (LTKWFFCCVCTILTMPFF) traverse the membrane as a helical; Signal-anchor for type II membrane protein segment. The Lumenal segment spans residues 31-178 (KKPYRKRGIS…ESIEKPENDN (148 aa)).

The protein localises to the endoplasmic reticulum membrane. Has a role in meiosis. This chain is Meiotically up-regulated gene 95 protein (mug95), found in Schizosaccharomyces pombe (strain 972 / ATCC 24843) (Fission yeast).